A 513-amino-acid polypeptide reads, in one-letter code: Alpha,alpha-trehalose-phosphate synthase [UDP-forming] (513 aa).

Tyr-40 carries the post-translational modification Phosphotyrosine. 2 residues coordinate D-glucose 6-phosphate: Tyr-104 and Asp-158. Residues Arg-294 and Lys-299 each contribute to the UDP site. Positions 294 and 299 each coordinate UDP-alpha-D-glucose. Residue Arg-332 coordinates D-glucose 6-phosphate. 393–401 lines the UDP-alpha-D-glucose pocket; it reads DGMNLVSYE. 397 to 401 contributes to the UDP binding site; that stretch reads LVSYE. Ser-503 carries the post-translational modification Phosphoserine.

It belongs to the glycosyltransferase 20 family. As to quaternary structure, homomer. Component of the trehalose synthase complex that contains at least tps1, ntp1 and tpp1. Interacts with tpp1. Interacts with ntp1; the interaction is independent of stress conditions.

It localises to the cytoplasm. The protein localises to the nucleus. It carries out the reaction D-glucose 6-phosphate + UDP-alpha-D-glucose = alpha,alpha-trehalose 6-phosphate + UDP + H(+). It functions in the pathway carbohydrate biosynthesis. Synthase catalytic subunit of the trehalose synthase complex that catalyzes the production of trehalose from glucose-6-phosphate and UDP-alpha-D-glucose in a two step process. The disaccharide trehalose serves as a storage carbohydrate that is mobilized during nutrient stress and spore germination. Together with ntp1, regulates the level of trehalose as a protectant for cell integrity during thermal and osmotic stress. The sequence is that of Alpha,alpha-trehalose-phosphate synthase [UDP-forming] from Schizosaccharomyces pombe (strain 972 / ATCC 24843) (Fission yeast).